We begin with the raw amino-acid sequence, 584 residues long: Gag-Pro polyprotein (584 aa).

Glycine 2 carries N-myristoyl glycine; by host lipidation. Residues 95 to 116 (EAPPSAPLAEDPQKPPPYPEQA) are disordered. Residues 98–101 (PSAP) carry the PTAP/PSAP motif motif. The short motif at 109-112 (PPPY) is the PPXY motif element. 2 consecutive CCHC-type zinc fingers follow at residues 349–366 (QPCF…DCKQ) and 372–389 (GPCP…DCPQ). A Peptidase A2 domain is found at 457 to 535 (VQALLDTGAD…NQWTILGRDA (79 aa)). Aspartate 462 (for protease activity; shared with dimeric partner) is an active-site residue.

Interacts with human TSG101. This interaction is essential for budding and release of viral particles. Specific enzymatic cleavages by the viral protease yield mature proteins. The polyprotein is cleaved during and after budding, this process is termed maturation. The protease is autoproteolytically processed at its N- and C-termini.

It is found in the virion. Matrix protein p19 targets Gag, Gag-Pro and Gag-Pro-Pol polyproteins to the plasma membrane via a multipartite membrane binding signal, that includes its myristoylated N-terminus. Also mediates nuclear localization of the preintegration complex. Functionally, capsid protein p24 forms the conical core of the virus that encapsulates the genomic RNA-nucleocapsid complex. Its function is as follows. Nucleocapsid protein p15 is involved in the packaging and encapsidation of two copies of the genome. In terms of biological role, the aspartyl protease mediates proteolytic cleavages of Gag, Gag-Pro and Gag-Pro-Pol polyproteins during or shortly after the release of the virion from the plasma membrane. Cleavages take place as an ordered, step-wise cascade to yield mature proteins. This process is called maturation. Displays maximal activity during the budding process just prior to particle release from the cell. Hydrolyzes host EIF4GI in order to shut off the capped cellular mRNA translation. The resulting inhibition of cellular protein synthesis serves to ensure maximal viral gene expression and to evade host immune response. The protein is Gag-Pro polyprotein (gag-pro) of Homo sapiens (Human).